A 690-amino-acid polypeptide reads, in one-letter code: Protein arginine N-methyltransferase 7 (690 aa).

2 consecutive SAM-dependent MTase PRMT-type domains span residues 14-357 and 366-690; these read ENSW…YSLW and AKSV…QKKP.

The protein belongs to the class I-like SAM-binding methyltransferase superfamily. Protein arginine N-methyltransferase family. PRMT7 subfamily.

Essential arginine methyltransferase that can both catalyze the formation of omega-N monomethylarginine (MMA) and symmetrical dimethylarginine (sDMA). Specifically mediates the symmetrical dimethylation of arginine residues in the small nuclear ribonucleoproteins SmD1 and SmD3. This chain is Protein arginine N-methyltransferase 7 (Art7), found in Drosophila ananassae (Fruit fly).